We begin with the raw amino-acid sequence, 413 residues long: Acetate kinase (413 aa).

A Mg(2+)-binding site is contributed by Asn7. Lys14 contacts ATP. A substrate-binding site is contributed by Arg98. Asp157 functions as the Proton donor/acceptor in the catalytic mechanism. ATP-binding positions include 216 to 220 (HIGNG), 291 to 293 (DLR), and 339 to 343 (GVGEN). Glu392 contributes to the Mg(2+) binding site.

The protein belongs to the acetokinase family. In terms of assembly, homodimer. Requires Mg(2+) as cofactor. Mn(2+) serves as cofactor.

The protein resides in the cytoplasm. The catalysed reaction is acetate + ATP = acetyl phosphate + ADP. Its pathway is metabolic intermediate biosynthesis; acetyl-CoA biosynthesis; acetyl-CoA from acetate: step 1/2. Functionally, catalyzes the formation of acetyl phosphate from acetate and ATP. Can also catalyze the reverse reaction. In Synechocystis sp. (strain ATCC 27184 / PCC 6803 / Kazusa), this protein is Acetate kinase.